A 523-amino-acid polypeptide reads, in one-letter code: Glutamate--cysteine ligase (523 aa).

The protein belongs to the glutamate--cysteine ligase type 1 family. Type 1 subfamily.

The catalysed reaction is L-cysteine + L-glutamate + ATP = gamma-L-glutamyl-L-cysteine + ADP + phosphate + H(+). Its pathway is sulfur metabolism; glutathione biosynthesis; glutathione from L-cysteine and L-glutamate: step 1/2. This chain is Glutamate--cysteine ligase, found in Baumannia cicadellinicola subsp. Homalodisca coagulata.